A 29-amino-acid chain; its full sequence is Cyclotide mela-4 (29 aa).

A cross-link (cyclopeptide (Gly-Asn)) is located at residues 1 to 29 (GKPICGETCFKGKCYTPGCTCSYPICKKN). Intrachain disulfides connect Cys5-Cys19, Cys9-Cys21, and Cys14-Cys26.

In terms of processing, this is a cyclic peptide. Contains 3 disulfide bonds.

Probably participates in a plant defense mechanism (Potential). Binds to and induces leakage in phospholipd membranes, particularly ones containing 1-palmitoyl-2-oleophosphatidylethanolamine (POPE). In vitro, displays cytotoxicity against cultured cells. Not active against Gram-negative bacterium E.coli ATCC 25922 or Gram-positive bacterium S.aureus ATCC 25923 up to a concentration of 64 uM. In Melicytus latifolius (Norfolk Island mahoe), this protein is Cyclotide mela-4.